The chain runs to 558 residues: AP2-like ethylene-responsive transcription factor AIL5 (558 aa).

Low complexity predominate over residues 1–54 (MKNNNNKSSSSSSYDSSLSPSSSSSSHQNWLSFSLSNNNNNFNSSSNPNLTSST). Disordered stretches follow at residues 1-65 (MKNN…PSHL), 74-93 (SPVE…ATAV), and 166-195 (HSSE…KNVE). DNA-binding regions (AP2/ERF) lie at residues 203-269 (IYRG…TNFP) and 305-363 (MYRG…TNFD). The tract at residues 387 to 406 (SPATAAADKTVDLSPSDSPS) is disordered.

Belongs to the AP2/ERF transcription factor family. AP2 subfamily. Expressed in roots, seedlings, inflorescence, and siliques. Also detected at low levels in leaves.

Its subcellular location is the nucleus. Its function is as follows. Probably acts as a transcriptional activator. Binds to the GCC-box pathogenesis-related promoter element. May be involved in the regulation of gene expression by stress factors and by components of stress signal transduction pathways. Involved in the regulation of floral organs size. This is AP2-like ethylene-responsive transcription factor AIL5 from Arabidopsis thaliana (Mouse-ear cress).